A 24-amino-acid polypeptide reads, in one-letter code: Glutamate dehydrogenase (24 aa).

It belongs to the Glu/Leu/Phe/Val dehydrogenases family. In terms of assembly, homohexamer.

The protein localises to the cytoplasm. The enzyme catalyses L-glutamate + NAD(+) + H2O = 2-oxoglutarate + NH4(+) + NADH + H(+). It catalyses the reaction L-glutamate + NADP(+) + H2O = 2-oxoglutarate + NH4(+) + NADPH + H(+). This Pyrococcus woesei protein is Glutamate dehydrogenase (gdhA).